The chain runs to 156 residues: Small ribosomal subunit protein uS7 (156 aa).

The protein belongs to the universal ribosomal protein uS7 family. Part of the 30S ribosomal subunit. Contacts proteins S9 and S11.

Functionally, one of the primary rRNA binding proteins, it binds directly to 16S rRNA where it nucleates assembly of the head domain of the 30S subunit. Is located at the subunit interface close to the decoding center, probably blocks exit of the E-site tRNA. The protein is Small ribosomal subunit protein uS7 of Deinococcus deserti (strain DSM 17065 / CIP 109153 / LMG 22923 / VCD115).